The chain runs to 261 residues: Insulin-like growth factor-binding protein-related protein 1 (261 aa).

Residues 1–17 form the signal peptide; that stretch reads MWIPLLLVALVVPAIRC. In terms of domain architecture, IGFBP N-terminal spans 18-101; it reads ERKCGECNPE…DPPEAMCVCL (84 aa). Disulfide bonds link C21–C45, C24–C47, C29–C48, C36–C51, C59–C82, C76–C98, C100–C118, and C107–C139. A Kazal-like domain is found at 70 to 141; that stretch reads NRGHGPCGEY…RAMHRGPCKS (72 aa). The 101-residue stretch at 143 to 243 folds into the Ig-like C2-type domain; the sequence is PKITSPPEEA…GESSAAARVV (101 aa). N154 is a glycosylation site (N-linked (GlcNAc...) asparagine). Residues C164 and C227 are joined by a disulfide bond.

In terms of tissue distribution, expressed by the venom gland.

The protein localises to the secreted. The chain is Insulin-like growth factor-binding protein-related protein 1 from Cupiennius salei (American wandering spider).